The following is a 343-amino-acid chain: Aspartate carbamoyltransferase catalytic subunit (343 aa).

The carbamoyl phosphate site is built by Arg91 and Thr92. Residue Lys119 participates in L-aspartate binding. 3 residues coordinate carbamoyl phosphate: Arg141, His171, and Gln174. Residues Arg204 and Arg259 each coordinate L-aspartate. Residues Gly300 and Pro301 each coordinate carbamoyl phosphate.

The protein belongs to the aspartate/ornithine carbamoyltransferase superfamily. ATCase family. In terms of assembly, heterododecamer (2C3:3R2) of six catalytic PyrB chains organized as two trimers (C3), and six regulatory PyrI chains organized as three dimers (R2).

It carries out the reaction carbamoyl phosphate + L-aspartate = N-carbamoyl-L-aspartate + phosphate + H(+). The protein operates within pyrimidine metabolism; UMP biosynthesis via de novo pathway; (S)-dihydroorotate from bicarbonate: step 2/3. In terms of biological role, catalyzes the condensation of carbamoyl phosphate and aspartate to form carbamoyl aspartate and inorganic phosphate, the committed step in the de novo pyrimidine nucleotide biosynthesis pathway. The protein is Aspartate carbamoyltransferase catalytic subunit of Burkholderia mallei (strain NCTC 10247).